Reading from the N-terminus, the 318-residue chain is Malate dehydrogenase (318 aa).

NAD(+) is bound by residues 10 to 15 (GGGQIG) and Asp-34. Positions 83 and 89 each coordinate substrate. Residues Asn-96 and 119 to 121 (ISN) contribute to the NAD(+) site. Positions 121 and 152 each coordinate substrate. His-176 (proton acceptor) is an active-site residue.

It belongs to the LDH/MDH superfamily. MDH type 3 family.

The enzyme catalyses (S)-malate + NAD(+) = oxaloacetate + NADH + H(+). Functionally, catalyzes the reversible oxidation of malate to oxaloacetate. The protein is Malate dehydrogenase of Geotalea uraniireducens (strain Rf4) (Geobacter uraniireducens).